The chain runs to 357 residues: MNTLFIHCRPGFEGEVCSEIADHAARLNVAGYAKAKPSTACAEFICTEDDGAQRLMQGLRFPELIFPRQWARGGFIDLPETDRISVILAYLANFPQCGSLWLEVVDTNDGKELSNFCKKFEAPLRKALTAAGKLVDDATKPRLLLTFKSGREVFVGLADAGNSAMWPMGIPRLKFPREAPSRSTLKLEEAWHHFIPRDQWDERLHGDMTGVDLGAAPGGWTWQLVNRGMLVTAVDNGPMAESLMDTGLVQHLMADGFTYKPRQPVDWMVCDIVEKPARNAALLETWIGEGHCREAVVNLKLPMRQRYAEVKRLLERIEEGFKARGIRVAIGCKQLYHDREEVTCHLRRLDLKKPKSA.

S-adenosyl-L-methionine is bound by residues serine 183, alanine 216–glycine 219, aspartate 235, aspartate 255, and aspartate 271. Lysine 300 serves as the catalytic Proton acceptor.

This sequence belongs to the class I-like SAM-binding methyltransferase superfamily. RNA methyltransferase RlmE family. RlmM subfamily. As to quaternary structure, monomer.

The protein localises to the cytoplasm. The catalysed reaction is cytidine(2498) in 23S rRNA + S-adenosyl-L-methionine = 2'-O-methylcytidine(2498) in 23S rRNA + S-adenosyl-L-homocysteine + H(+). In terms of biological role, catalyzes the 2'-O-methylation at nucleotide C2498 in 23S rRNA. The protein is Ribosomal RNA large subunit methyltransferase M of Pseudomonas fluorescens (strain ATCC BAA-477 / NRRL B-23932 / Pf-5).